The chain runs to 238 residues: Large ribosomal subunit protein uL5c (238 aa).

Belongs to the universal ribosomal protein uL5 family. Part of the 50S ribosomal subunit; contacts the 5S rRNA.

Its subcellular location is the plastid. The protein localises to the chloroplast. Binds 5S rRNA, forms part of the central protuberance of the 50S subunit. The chain is Large ribosomal subunit protein uL5c (rpl5) from Trieres chinensis (Marine centric diatom).